The sequence spans 133 residues: Small ribosomal subunit protein uS8 (133 aa).

It belongs to the universal ribosomal protein uS8 family. In terms of assembly, part of the 30S ribosomal subunit. Contacts proteins S5 and S12.

In terms of biological role, one of the primary rRNA binding proteins, it binds directly to 16S rRNA central domain where it helps coordinate assembly of the platform of the 30S subunit. The chain is Small ribosomal subunit protein uS8 from Synechococcus sp. (strain RCC307).